Reading from the N-terminus, the 580-residue chain is RuBisCO large subunit-binding protein subunit alpha, chloroplastic (580 aa).

Residues 1–17 show a composition bias toward polar residues; sequence MAQSQLAKGSRQTTGRP. The segment at 1-24 is disordered; the sequence is MAQSQLAKGSRQTTGRPFQNKPAR.

Belongs to the chaperonin (HSP60) family. In terms of assembly, oligomer of probably six alpha and six beta subunits.

It localises to the plastid. The protein resides in the chloroplast. This protein binds RuBisCO small and large subunits and is implicated in the assembly of the enzyme oligomer. The protein is RuBisCO large subunit-binding protein subunit alpha, chloroplastic of Chlamydomonas reinhardtii (Chlamydomonas smithii).